Here is a 366-residue protein sequence, read N- to C-terminus: GTP cyclohydrolase 1 type 2 homolog (366 aa).

Residues H64, H65, D102, H326, and E329 each coordinate Zn(2+).

Belongs to the GTP cyclohydrolase I type 2/NIF3 family. In terms of assembly, homohexamer.

This chain is GTP cyclohydrolase 1 type 2 homolog, found in Staphylococcus aureus (strain MRSA252).